We begin with the raw amino-acid sequence, 345 residues long: 4-hydroxy-3-methylbut-2-en-1-yl diphosphate synthase (flavodoxin) (345 aa).

Residues cysteine 271, cysteine 274, cysteine 306, and glutamate 313 each coordinate [4Fe-4S] cluster.

This sequence belongs to the IspG family. It depends on [4Fe-4S] cluster as a cofactor.

The catalysed reaction is (2E)-4-hydroxy-3-methylbut-2-enyl diphosphate + oxidized [flavodoxin] + H2O + 2 H(+) = 2-C-methyl-D-erythritol 2,4-cyclic diphosphate + reduced [flavodoxin]. It participates in isoprenoid biosynthesis; isopentenyl diphosphate biosynthesis via DXP pathway; isopentenyl diphosphate from 1-deoxy-D-xylulose 5-phosphate: step 5/6. Its function is as follows. Converts 2C-methyl-D-erythritol 2,4-cyclodiphosphate (ME-2,4cPP) into 1-hydroxy-2-methyl-2-(E)-butenyl 4-diphosphate. This chain is 4-hydroxy-3-methylbut-2-en-1-yl diphosphate synthase (flavodoxin), found in Haemophilus influenzae (strain PittEE).